Reading from the N-terminus, the 209-residue chain is Urease accessory protein UreE (209 aa).

Residues 170–196 (EHHGHSHSHSHDHDHDHDHDHDHDHQH) show a composition bias toward basic and acidic residues. The segment at 170–209 (EHHGHSHSHSHDHDHDHDHDHDHDHQHGPSCSHGHHHGHR) is disordered.

The protein belongs to the UreE family.

It is found in the cytoplasm. Functionally, involved in urease metallocenter assembly. Binds nickel. Probably functions as a nickel donor during metallocenter assembly. This Burkholderia mallei (strain NCTC 10247) protein is Urease accessory protein UreE.